Reading from the N-terminus, the 200-residue chain is Interleukin 17-like protein (200 aa).

Residues 1-26 (MGNFFLFAMTLVVCSVIVLLTGVADS) form the signal peptide. Asn46 is a glycosylation site (N-linked (GlcNAc...) asparagine). Disulfide bonds link Cys122–Cys175 and Cys127–Cys177. An N-linked (GlcNAc...) asparagine glycan is attached at Asn192.

The protein belongs to the IL-17 family. As to expression, expressed in several tissues including hemocytes, gills, mantle, adductor muscle, labial palps, digestive glands and heart with highest levels in gills and lowest levels in adductor muscle and heart.

The protein resides in the secreted. The chain is Interleukin 17-like protein from Magallana gigas (Pacific oyster).